A 178-amino-acid chain; its full sequence is Fatty-acid and retinol-binding protein 1 (178 aa).

The first 16 residues, 1–16, serve as a signal peptide directing secretion; that stretch reads MYHRLILLALVGTTMA. Coiled-coil stretches lie at residues 67–89 and 130–153; these read DAAL…ELRN and KQAA…ELKV.

Belongs to the fatty-acid and retinol-binding protein (FARBP) family. Post-translationally, not glycosylated.

It is found in the secreted. Binds retinol. Also binds the fluorescent fatty acid 11-((5-dimethylaminonaphthalene-1-sulfonyl)amino)undecanoic acid (DAUDA). The long chain fatty acid oleic acid can act competitively to displace bound DAUDA and retinol. In Brugia malayi (Filarial nematode worm), this protein is Fatty-acid and retinol-binding protein 1.